The chain runs to 395 residues: Nicotinate phosphoribosyltransferase (395 aa).

Phosphohistidine; by autocatalysis is present on H222.

Belongs to the NAPRTase family. In terms of processing, transiently phosphorylated on a His residue during the reaction cycle. Phosphorylation strongly increases the affinity for substrates and increases the rate of nicotinate D-ribonucleotide production. Dephosphorylation regenerates the low-affinity form of the enzyme, leading to product release.

It carries out the reaction nicotinate + 5-phospho-alpha-D-ribose 1-diphosphate + ATP + H2O = nicotinate beta-D-ribonucleotide + ADP + phosphate + diphosphate. The protein operates within cofactor biosynthesis; NAD(+) biosynthesis; nicotinate D-ribonucleotide from nicotinate: step 1/1. In terms of biological role, catalyzes the synthesis of beta-nicotinate D-ribonucleotide from nicotinate and 5-phospho-D-ribose 1-phosphate at the expense of ATP. This Polaromonas sp. (strain JS666 / ATCC BAA-500) protein is Nicotinate phosphoribosyltransferase.